Reading from the N-terminus, the 87-residue chain is Cell division topological specificity factor (87 aa).

Belongs to the MinE family.

Its function is as follows. Prevents the cell division inhibition by proteins MinC and MinD at internal division sites while permitting inhibition at polar sites. This ensures cell division at the proper site by restricting the formation of a division septum at the midpoint of the long axis of the cell. The chain is Cell division topological specificity factor from Delftia acidovorans (strain DSM 14801 / SPH-1).